The primary structure comprises 756 residues: Ent-kaur-16-ene synthase, chloroplastic (756 aa).

Mg(2+) is bound by residues Asp-496, Asp-500, Asn-639, and Glu-647. The short motif at 496–500 is the DDXXD motif element; that stretch reads DDFFD.

The protein belongs to the terpene synthase family. Requires Mg(2+) as cofactor. Highly expressed in panicles and at lower levels in leaves and stems.

The protein resides in the plastid. It localises to the chloroplast. The catalysed reaction is ent-copalyl diphosphate = ent-kaur-16-ene + diphosphate. It functions in the pathway plant hormone biosynthesis; gibberellin biosynthesis. Functionally, catalyzes the conversion of ent-copalyl diphosphate to the gibberellin precursor ent-kaur-16-ene. The sequence is that of Ent-kaur-16-ene synthase, chloroplastic (KS1) from Oryza sativa subsp. japonica (Rice).